The following is a 302-amino-acid chain: GTPase Era (302 aa).

The Era-type G domain occupies 10–178 (RCGYVAIVGR…EAQIAKHLPE (169 aa)). Positions 18–25 (GRPNVGKS) are G1. 18-25 (GRPNVGKS) provides a ligand contact to GTP. Positions 44–48 (QTTRH) are G2. The interval 65-68 (DTPG) is G3. Residues 65 to 69 (DTPGM) and 127 to 130 (NKTD) each bind GTP. Residues 127–130 (NKTD) form a G4 region. Positions 157 to 159 (ISA) are G5. The 85-residue stretch at 201 to 285 (VREKIMRQLG…MLNLWVKVKG (85 aa)) folds into the KH type-2 domain.

It belongs to the TRAFAC class TrmE-Era-EngA-EngB-Septin-like GTPase superfamily. Era GTPase family. Monomer.

It is found in the cytoplasm. Its subcellular location is the cell inner membrane. In terms of biological role, an essential GTPase that binds both GDP and GTP, with rapid nucleotide exchange. Plays a role in 16S rRNA processing and 30S ribosomal subunit biogenesis and possibly also in cell cycle regulation and energy metabolism. In Pseudomonas putida (strain ATCC 47054 / DSM 6125 / CFBP 8728 / NCIMB 11950 / KT2440), this protein is GTPase Era.